The sequence spans 237 residues: MALNFKADTSALSRLPTKRKLAGQKAHLEMYRKLAKYSSVGHLLKFLAIDHPCPTRCQLKIFFEVCLGNRIADCVILLSCGETRLCYIIELKTCMSDSPSMYNETRLCQRSQGLCQLSDALRFISFNAPAGRQKWHLVPHLIFKSQRGLKTIYTETPQFPTNIIHSSPDKLASFFFSRADREVSEKVHAPDAGGQEKMAAKRRLLVPKSKALRARRQRLIERNKKACFKSQEKRARR.

Belongs to the herpesviridae UL24 family.

The polypeptide is Protein UL24 homolog (20) (Equus caballus (Horse)).